A 148-amino-acid chain; its full sequence is 3-dehydroquinate dehydratase (148 aa).

The active-site Proton acceptor is Tyr-23. Residues Asn-74, His-80, and Asp-87 each coordinate substrate. His-100 serves as the catalytic Proton donor. Substrate contacts are provided by residues 101–102 and Arg-111; that span reads IS.

It belongs to the type-II 3-dehydroquinase family. In terms of assembly, homododecamer.

The catalysed reaction is 3-dehydroquinate = 3-dehydroshikimate + H2O. It functions in the pathway metabolic intermediate biosynthesis; chorismate biosynthesis; chorismate from D-erythrose 4-phosphate and phosphoenolpyruvate: step 3/7. Catalyzes a trans-dehydration via an enolate intermediate. The protein is 3-dehydroquinate dehydratase of Anoxybacillus flavithermus (strain DSM 21510 / WK1).